Consider the following 691-residue polypeptide: Guanylate cyclase soluble subunit alpha-1 (691 aa).

The interval 26-65 (PREPLGEATGSGPASTPGQPGVCPGVPDKNPPGRLPRRKT) is disordered. One can recognise a Guanylate cyclase domain in the interval 482-609 (TMLFSDIVGF…NNVTLANKFE (128 aa)).

It belongs to the adenylyl cyclase class-4/guanylyl cyclase family. As to quaternary structure, heterodimer of an alpha and a beta chain.

The protein localises to the cytoplasm. It catalyses the reaction GTP = 3',5'-cyclic GMP + diphosphate. Activated by nitric oxide in the presence of magnesium or manganese ions. This Bos taurus (Bovine) protein is Guanylate cyclase soluble subunit alpha-1 (GUCY1A1).